The primary structure comprises 427 residues: Glutamyl-tRNA reductase (427 aa).

Residues 49–52 (TCNR), Ser105, 110–112 (EPQ), and Gln116 each bind substrate. Catalysis depends on Cys50, which acts as the Nucleophile. Residue 185 to 190 (AAGEMN) coordinates NADP(+).

The protein belongs to the glutamyl-tRNA reductase family. Homodimer.

It catalyses the reaction (S)-4-amino-5-oxopentanoate + tRNA(Glu) + NADP(+) = L-glutamyl-tRNA(Glu) + NADPH + H(+). It participates in porphyrin-containing compound metabolism; protoporphyrin-IX biosynthesis; 5-aminolevulinate from L-glutamyl-tRNA(Glu): step 1/2. In terms of biological role, catalyzes the NADPH-dependent reduction of glutamyl-tRNA(Glu) to glutamate 1-semialdehyde (GSA). The protein is Glutamyl-tRNA reductase of Acinetobacter baumannii (strain AB307-0294).